The primary structure comprises 476 residues: Tryptophan--tRNA ligase, cytoplasmic (476 aa).

The dispensable to the catalytic activity stretch occupies residues 1-117 (MADMSNGEQG…LIVRFGSSKI (117 aa)). Residues 13 to 69 (SPLELFHSIAAQGELVRDLKARNAAKDEIDSAVKMLLSLKTSYKAATGEDYKVDCPP) enclose the WHEP-TRS domain. A disordered region spans residues 63 to 83 (YKVDCPPGDPAPESGEGLDAT). N6-succinyllysine is present on Lys-159. A 'HIGH' region motif is present at residues 169–178 (PSSEAMHVGH). A 'KMSKS' region motif is present at residues 354–358 (KMSAS). Residue Ser-356 is modified to Phosphoserine.

Belongs to the class-I aminoacyl-tRNA synthetase family. Homodimer. Interacts with oxidized form of GAPDH. In terms of processing, proteolytic cleavage generates 2 forms; T1-TrpRS and T2-TrpRS.

Its subcellular location is the cytoplasm. It catalyses the reaction tRNA(Trp) + L-tryptophan + ATP = L-tryptophyl-tRNA(Trp) + AMP + diphosphate + H(+). T1-TrpRS has aminoacylation activity while T2-TrpRS lacks it. T1-TrpRS and T2-TrpRS possess angiostatic activity. T2-TrpRS inhibits fluid shear stress-activated responses of endothelial cells. Regulates ERK, Akt, and eNOS activation pathways that are associated with angiogenesis, cytoskeletal reorganization and shear stress-responsive gene expression. This chain is Tryptophan--tRNA ligase, cytoplasmic (WARS1), found in Bos taurus (Bovine).